Consider the following 1178-residue polypeptide: Leucine--tRNA ligase, cytoplasmic (1178 aa).

L-leucine-binding residues include Y54 and Y56. The 'HIGH' region signature appears at 62–65; the sequence is HLGH. At S169 the chain carries Phosphoserine. The editing domain stretch occupies residues 262 to 511; sequence GPQEYTLVKL…DAGDALIYME (250 aa). L-leucine-binding residues include L596 and S599. Positions 718–722 match the 'KMSKS' region motif; sequence KMSKS. K721 contributes to the ATP binding site. S722 is subject to Phosphoserine. Residues K972 and K1049 each carry the N6-acetyllysine modification.

Belongs to the class-I aminoacyl-tRNA synthetase family.

It is found in the cytoplasm. The enzyme catalyses tRNA(Leu) + L-leucine + ATP = L-leucyl-tRNA(Leu) + AMP + diphosphate. It catalyses the reaction L-methionyl-tRNA(Leu) + H2O = tRNA(Leu) + L-methionine + H(+). With respect to regulation, 5-fluoro-1,3-dihydro-1-hydroxy-1,2-benzoxaborole inhibits LARS1 by forming a covalent adduct with the 3' adenosine of tRNA(Leu) at the editing site, thus locking the enzyme in an inactive conformation. Its function is as follows. Aminoacyl-tRNA synthetase that catalyzes the specific attachment of leucine to its cognate tRNA (tRNA(Leu)). It performs tRNA aminoacylation in a two-step reaction: Leu is initially activated by ATP to form a leucyl-adenylate (Leu-AMP) intermediate; then the leucyl moiety is transferred to the acceptor 3' end of the tRNA to yield leucyl-tRNA. To improve the fidelity of catalytic reactions, it is also able to hydrolyze misactivated aminoacyl-adenylate intermediates (pre-transfer editing) and mischarged aminoacyl-tRNAs (post-transfer editing). This is Leucine--tRNA ligase, cytoplasmic (Lars1) from Mus musculus (Mouse).